Consider the following 582-residue polypeptide: Proline--tRNA ligase (582 aa).

It belongs to the class-II aminoacyl-tRNA synthetase family. ProS type 1 subfamily. As to quaternary structure, homodimer.

It is found in the cytoplasm. The enzyme catalyses tRNA(Pro) + L-proline + ATP = L-prolyl-tRNA(Pro) + AMP + diphosphate. Catalyzes the attachment of proline to tRNA(Pro) in a two-step reaction: proline is first activated by ATP to form Pro-AMP and then transferred to the acceptor end of tRNA(Pro). As ProRS can inadvertently accommodate and process non-cognate amino acids such as alanine and cysteine, to avoid such errors it has two additional distinct editing activities against alanine. One activity is designated as 'pretransfer' editing and involves the tRNA(Pro)-independent hydrolysis of activated Ala-AMP. The other activity is designated 'posttransfer' editing and involves deacylation of mischarged Ala-tRNA(Pro). The misacylated Cys-tRNA(Pro) is not edited by ProRS. This chain is Proline--tRNA ligase, found in Mycobacterium bovis (strain ATCC BAA-935 / AF2122/97).